Here is a 118-residue protein sequence, read N- to C-terminus: Large ribosomal subunit protein bL19 (118 aa).

It belongs to the bacterial ribosomal protein bL19 family.

Functionally, this protein is located at the 30S-50S ribosomal subunit interface and may play a role in the structure and function of the aminoacyl-tRNA binding site. This Dictyoglomus thermophilum (strain ATCC 35947 / DSM 3960 / H-6-12) protein is Large ribosomal subunit protein bL19.